The chain runs to 701 residues: ABC transporter G family member 23 (701 aa).

The ABC transporter domain occupies 7–237 (INLNNVSRSY…YECSLLEDVY (231 aa)). 39-46 (GSSGSGKT) contacts ATP. A run of 6 helical transmembrane segments spans residues 335–355 (FPLV…FLAI), 493–513 (FLAP…FLSI), 541–561 (HILA…LIAV), 574–596 (LIYL…ISLI), 608–628 (LAIF…EAII), and 665–685 (LIII…STPI). The ABC transmembrane type-2 domain occupies 459–686 (FQKAFNKIAN…SLIVISTPIG (228 aa)).

It belongs to the ABC transporter superfamily. ABCG family.

It localises to the membrane. This Dictyostelium discoideum (Social amoeba) protein is ABC transporter G family member 23 (abcG23).